The following is a 108-amino-acid chain: MIVSTTPTLEGHKIDAYYGIVVGEAVMGANVFKDLFASIRDIVGGRSGSYEEELTTARKLAFTELEHEARSMGANAVVGIDLDYQVIGDKGSMLMVSISGTAVKTSPL.

This sequence belongs to the UPF0145 family.

This chain is UPF0145 protein MADE_1007770, found in Alteromonas mediterranea (strain DSM 17117 / CIP 110805 / LMG 28347 / Deep ecotype).